The primary structure comprises 424 residues: Serine--tRNA ligase (424 aa).

228 to 230 serves as a coordination point for L-serine; the sequence is TAE. An ATP-binding site is contributed by 259–261; that stretch reads RSE. Glu282 contributes to the L-serine binding site. 346–349 is a binding site for ATP; that stretch reads EISS. Ser382 serves as a coordination point for L-serine.

The protein belongs to the class-II aminoacyl-tRNA synthetase family. Type-1 seryl-tRNA synthetase subfamily. Homodimer. The tRNA molecule binds across the dimer.

It localises to the cytoplasm. It carries out the reaction tRNA(Ser) + L-serine + ATP = L-seryl-tRNA(Ser) + AMP + diphosphate + H(+). The catalysed reaction is tRNA(Sec) + L-serine + ATP = L-seryl-tRNA(Sec) + AMP + diphosphate + H(+). It functions in the pathway aminoacyl-tRNA biosynthesis; selenocysteinyl-tRNA(Sec) biosynthesis; L-seryl-tRNA(Sec) from L-serine and tRNA(Sec): step 1/1. Functionally, catalyzes the attachment of serine to tRNA(Ser). Is also able to aminoacylate tRNA(Sec) with serine, to form the misacylated tRNA L-seryl-tRNA(Sec), which will be further converted into selenocysteinyl-tRNA(Sec). This Rhodospirillum centenum (strain ATCC 51521 / SW) protein is Serine--tRNA ligase.